A 94-amino-acid chain; its full sequence is PqqA binding protein (94 aa).

This sequence belongs to the PqqD family. Monomer. Interacts with PqqE.

Its pathway is cofactor biosynthesis; pyrroloquinoline quinone biosynthesis. In terms of biological role, functions as a PqqA binding protein and presents PqqA to PqqE, in the pyrroloquinoline quinone (PQQ) biosynthetic pathway. The protein is PqqA binding protein of Acinetobacter baumannii (strain SDF).